We begin with the raw amino-acid sequence, 299 residues long: MNKKLSVQEIILTLQKYWAEQGCMLMEAYDTEKGAGTMSPYTFLRAIGPEPWNAAYVEPSRRPADGRYGENPNRLYQHHQFQVVMKPSPENIQELYLGSLKALGIDPLEHDIRFVEDNWENPSMGCAGVGWEVWLDGMEVTQFTYFQQVGGLEVNPVTSEVTYGLERLSSYIQDVESVFDLEWGNGVSYGDIFREPEFEHSKYSFEESNQAMLEKMFNDFEAEANRLIEEGLVHPAYDYILKCSHTFNLLDARGTVSVTERAGFLSRIRNMARKVARAFVEEREKLGFPLLKNNEEEAK.

Belongs to the class-II aminoacyl-tRNA synthetase family. In terms of assembly, tetramer of two alpha and two beta subunits.

It localises to the cytoplasm. It catalyses the reaction tRNA(Gly) + glycine + ATP = glycyl-tRNA(Gly) + AMP + diphosphate. This is Glycine--tRNA ligase alpha subunit from Pediococcus pentosaceus (strain ATCC 25745 / CCUG 21536 / LMG 10740 / 183-1w).